The chain runs to 182 residues: Ribosome maturation factor RimM (182 aa).

The PRC barrel domain maps to 102 to 182; that stretch reads EEDDYYWKDL…RVEVDWDPGF (81 aa).

The protein belongs to the RimM family. Binds ribosomal protein uS19.

Its subcellular location is the cytoplasm. In terms of biological role, an accessory protein needed during the final step in the assembly of 30S ribosomal subunit, possibly for assembly of the head region. Essential for efficient processing of 16S rRNA. May be needed both before and after RbfA during the maturation of 16S rRNA. It has affinity for free ribosomal 30S subunits but not for 70S ribosomes. The chain is Ribosome maturation factor RimM from Yersinia pseudotuberculosis serotype IB (strain PB1/+).